Consider the following 100-residue polypeptide: Large ribosomal subunit protein uL23 (100 aa).

It belongs to the universal ribosomal protein uL23 family. In terms of assembly, part of the 50S ribosomal subunit. Contacts protein L29, and trigger factor when it is bound to the ribosome.

Functionally, one of the early assembly proteins it binds 23S rRNA. One of the proteins that surrounds the polypeptide exit tunnel on the outside of the ribosome. Forms the main docking site for trigger factor binding to the ribosome. This Vibrio atlanticus (strain LGP32) (Vibrio splendidus (strain Mel32)) protein is Large ribosomal subunit protein uL23.